The primary structure comprises 540 residues: DNA topoisomerase 1 (540 aa).

Residues 1 to 110 (MELFIVESPT…NIKRAVFYEI (110 aa)) form the Toprim domain. Mg(2+) contacts are provided by E7 and D79. The region spanning 126-536 (NMNLVYAQFA…FMEKIFGKEL (411 aa)) is the Topo IA-type catalytic domain. Residues 161-166 (SAGRVQ) form an interaction with DNA region. The O-(5'-phospho-DNA)-tyrosine intermediate role is filled by Y281.

Belongs to the type IA topoisomerase family. In terms of assembly, monomer. Requires Mg(2+) as cofactor.

It carries out the reaction ATP-independent breakage of single-stranded DNA, followed by passage and rejoining.. Functionally, releases the supercoiling and torsional tension of DNA, which is introduced during the DNA replication and transcription, by transiently cleaving and rejoining one strand of the DNA duplex. Introduces a single-strand break via transesterification at a target site in duplex DNA. The scissile phosphodiester is attacked by the catalytic tyrosine of the enzyme, resulting in the formation of a DNA-(5'-phosphotyrosyl)-enzyme intermediate and the expulsion of a 3'-OH DNA strand. The free DNA strand then undergoes passage around the unbroken strand, thus removing DNA supercoils. Finally, in the religation step, the DNA 3'-OH attacks the covalent intermediate to expel the active-site tyrosine and restore the DNA phosphodiester backbone. This chain is DNA topoisomerase 1, found in Aquifex aeolicus (strain VF5).